The chain runs to 289 residues: Glycine--tRNA ligase alpha subunit (289 aa).

Belongs to the class-II aminoacyl-tRNA synthetase family. In terms of assembly, tetramer of two alpha and two beta subunits.

The protein resides in the cytoplasm. The catalysed reaction is tRNA(Gly) + glycine + ATP = glycyl-tRNA(Gly) + AMP + diphosphate. The polypeptide is Glycine--tRNA ligase alpha subunit (Rickettsia bellii (strain OSU 85-389)).